A 1711-amino-acid polypeptide reads, in one-letter code: Reverse gyrase (1711 aa).

The RG N-terminal-type zinc finger occupies 1-39 (MKAVYREMCPNCWGRISDERLVMRNPCEECLDEPVHADS). Zn(2+) contacts are provided by Cys-9, Cys-12, Cys-27, and Cys-30. ATP is bound by residues Gln-89 and 106-113 (APTGMGKS). The Helicase ATP-binding domain occupies 93–256 (VKRLLKGRSF…RLKKQMSRYL (164 aa)). A DEAD box motif is present at residues 213–216 (DDVD). A topoisomerase I region spans residues 638-1711 (DLVRSALMIV…YSEIQRYVSG (1074 aa)). Residues 642 to 805 (SALMIVESPN…NIKRIEFHEV (164 aa)) form the Toprim domain. Glu-648 contacts Mg(2+). Residues 722–751 (LKRCRDCGHQFVDWEKKGVCPRCGSTNVRD) form an RG C-terminal-type zinc finger. 4 residues coordinate Zn(2+): Cys-725, Cys-728, Cys-741, and Cys-744. Position 774 (Asp-774) interacts with Mg(2+). Residues 821–1709 (NENRVNAQIV…ELYSEIQRYV (889 aa)) form the Topo IA-type catalytic domain. Residues 1160–1287 (VFGLVLGDGT…LSVYLYQIGI (128 aa)) enclose the DOD-type homing endonuclease domain. Residue Tyr-1452 is the O-(5'-phospho-DNA)-tyrosine intermediate of the active site.

This sequence in the N-terminal section; belongs to the DEAD box helicase family. DDVD subfamily. The protein in the C-terminal section; belongs to the type IA topoisomerase family. In terms of assembly, monomer. The cofactor is Zn(2+). Mg(2+) is required as a cofactor. This protein undergoes a protein self splicing that involves a post-translational excision of the intervening region (intein) followed by peptide ligation.

Its subcellular location is the cytoplasm. The catalysed reaction is ATP + H2O = ADP + phosphate + H(+). In terms of biological role, modifies the topological state of DNA by introducing positive supercoils in an ATP-dependent process, increasing the linking number in steps of +1. Binds to single-stranded DNA, transiently cleaves and then rejoins the ends, introducing a positive supercoil in the process. The scissile phosphodiester is attacked by the catalytic tyrosine of the enzyme, resulting in the formation of a DNA-(5'-phosphotyrosyl)-enzyme intermediate. Probably involved in rewinding DNA strands in regions of the chromosome that have opened up to allow replication, transcription, DNA repair and/or for DNA protection. The chain is Reverse gyrase from Thermococcus kodakarensis (strain ATCC BAA-918 / JCM 12380 / KOD1) (Pyrococcus kodakaraensis (strain KOD1)).